A 156-amino-acid chain; its full sequence is Large ribosomal subunit protein uL15 (156 aa).

A disordered region spans residues 14-35; that stretch reads GSRTHGWGRVGQHRKSGSSGGK.

Belongs to the universal ribosomal protein uL15 family. Part of the 50S ribosomal subunit.

Its function is as follows. Binds to the 23S rRNA. The polypeptide is Large ribosomal subunit protein uL15 (Pyrobaculum islandicum (strain DSM 4184 / JCM 9189 / GEO3)).